Reading from the N-terminus, the 193-residue chain is Nucleoside triphosphate pyrophosphatase (193 aa).

The active-site Proton acceptor is the Asp69.

Belongs to the Maf family. The cofactor is a divalent metal cation.

It localises to the cytoplasm. It carries out the reaction a ribonucleoside 5'-triphosphate + H2O = a ribonucleoside 5'-phosphate + diphosphate + H(+). It catalyses the reaction a 2'-deoxyribonucleoside 5'-triphosphate + H2O = a 2'-deoxyribonucleoside 5'-phosphate + diphosphate + H(+). Nucleoside triphosphate pyrophosphatase. May have a dual role in cell division arrest and in preventing the incorporation of modified nucleotides into cellular nucleic acids. The protein is Nucleoside triphosphate pyrophosphatase of Parasynechococcus marenigrum (strain WH8102).